A 144-amino-acid polypeptide reads, in one-letter code: MKIKIINRSHHPLPTYATSASAGMDLRASIEEPITLLPLERRLIPTGLFIELPVGYEAQIRPRSGLALRHGITLVNSPGTIDADYRGEIGIIMINLSNTPFTIADGERICQLVIARHEQAEWVLTDELADTERGAGGFGHTGKE.

Substrate contacts are provided by residues 63-65 (RSG), asparagine 76, and 80-82 (TID).

Belongs to the dUTPase family. Mg(2+) is required as a cofactor.

It carries out the reaction dUTP + H2O = dUMP + diphosphate + H(+). Its pathway is pyrimidine metabolism; dUMP biosynthesis; dUMP from dCTP (dUTP route): step 2/2. In terms of biological role, this enzyme is involved in nucleotide metabolism: it produces dUMP, the immediate precursor of thymidine nucleotides and it decreases the intracellular concentration of dUTP so that uracil cannot be incorporated into DNA. This is Deoxyuridine 5'-triphosphate nucleotidohydrolase from Porphyromonas gingivalis (strain ATCC BAA-308 / W83).